The chain runs to 1348 residues: Phosphoribosylformylglycinamidine synthase (1348 aa).

Residues 300 to 311 and Ala-701 each bind ATP; that span reads GAATGAGGEIRD. 4 residues coordinate Mg(2+): Asp-702, Glu-741, Asn-745, and Asp-941. An ATP-binding site is contributed by Ser-943. In terms of domain architecture, Glutamine amidotransferase type-1 spans 1099–1348; the sequence is VAILREQGVN…MFRNARVWCG (250 aa). The active-site Nucleophile is Cys-1192. Catalysis depends on residues His-1313 and Glu-1315.

The protein in the N-terminal section; belongs to the FGAMS family. Monomer.

The protein localises to the cytoplasm. The catalysed reaction is N(2)-formyl-N(1)-(5-phospho-beta-D-ribosyl)glycinamide + L-glutamine + ATP + H2O = 2-formamido-N(1)-(5-O-phospho-beta-D-ribosyl)acetamidine + L-glutamate + ADP + phosphate + H(+). It participates in purine metabolism; IMP biosynthesis via de novo pathway; 5-amino-1-(5-phospho-D-ribosyl)imidazole from N(2)-formyl-N(1)-(5-phospho-D-ribosyl)glycinamide: step 1/2. In terms of biological role, phosphoribosylformylglycinamidine synthase involved in the purines biosynthetic pathway. Catalyzes the ATP-dependent conversion of formylglycinamide ribonucleotide (FGAR) and glutamine to yield formylglycinamidine ribonucleotide (FGAM) and glutamate. This Xanthomonas axonopodis pv. citri (strain 306) protein is Phosphoribosylformylglycinamidine synthase.